Here is a 259-residue protein sequence, read N- to C-terminus: 5'-nucleotidase SurE (259 aa).

A divalent metal cation-binding residues include aspartate 8, aspartate 9, serine 41, and asparagine 100.

Belongs to the SurE nucleotidase family. A divalent metal cation serves as cofactor.

The protein localises to the cytoplasm. The catalysed reaction is a ribonucleoside 5'-phosphate + H2O = a ribonucleoside + phosphate. In terms of biological role, nucleotidase that shows phosphatase activity on nucleoside 5'-monophosphates. The protein is 5'-nucleotidase SurE of Natranaerobius thermophilus (strain ATCC BAA-1301 / DSM 18059 / JW/NM-WN-LF).